A 160-amino-acid polypeptide reads, in one-letter code: Cytochrome b6-f complex subunit 4 (160 aa).

The next 3 helical transmembrane spans lie at 36–56 (LLYIFPVCILGTIACCIGLGV), 95–115 (LLGVLSMAAVPIGLITVPFIE), and 131–151 (LVFLFGTFTAFWLGIGATMPI).

The protein belongs to the cytochrome b family. PetD subfamily. As to quaternary structure, the 4 large subunits of the cytochrome b6-f complex are cytochrome b6, subunit IV (17 kDa polypeptide, petD), cytochrome f and the Rieske protein, while the 4 small subunits are petG, petL, petM and petN. The complex functions as a dimer.

The protein localises to the plastid. It localises to the chloroplast thylakoid membrane. Its function is as follows. Component of the cytochrome b6-f complex, which mediates electron transfer between photosystem II (PSII) and photosystem I (PSI), cyclic electron flow around PSI, and state transitions. The sequence is that of Cytochrome b6-f complex subunit 4 from Emiliania huxleyi (Coccolithophore).